Here is a 450-residue protein sequence, read N- to C-terminus: MNQTETTPIRVRKNWKTSEIETLFDEQAGRIDPRIYTDEDLYQLELERVFARSWLLLGHETHIRKPGDYFTTYMGEDPVVVVRQKDASIAVFLNQCRHRGMRICRSDAGNAKAFTCSYHGWAYDTAGNLINVPYEAESFACLDKKEWSPLKARVETYKGLIFANWDENAIDLDTYLGEAKFYMDHMLDRTEAGTEVIPGIQKWVIPCNWKFAAEQFCSDMYHAGTTAHLSGIIAGLPEDLELADLAPPKFGKQYRASWGGHGSGFYIGDPNMMLAMMGPKVTSYLTEGPAAEKAAERLGSIERGTKIMLEHMTVFPTCSFLPGVNTIRTWHPRGPNEVEVWAFTVVDADAPDDIKEEFRRQTLRTFSAGGVFEQDDGENWVEIQHILRGHKARSRPFNAEMSMGQTVDNDPIYPGRISNNVYSEEAARGLYAHWLKMMTSPDWEALKATR.

A Rieske domain is found at 56–163 (LLGHETHIRK…VETYKGLIFA (108 aa)). 4 residues coordinate [2Fe-2S] cluster: cysteine 96, histidine 98, cysteine 116, and histidine 119. Fe cation is bound by residues histidine 222 and histidine 228.

It belongs to the bacterial ring-hydroxylating dioxygenase alpha subunit family. In terms of assembly, this dioxygenase system consists of four proteins: the two subunits of the hydroxylase component (BedC1 and BedC2), a ferredoxin (BedB) and a ferredoxin reductase (BedA). Requires [2Fe-2S] cluster as cofactor. The cofactor is Fe cation.

It carries out the reaction benzene + NADH + O2 + H(+) = cis-1,2-dihydrobenzene-1,2-diol + NAD(+). It participates in aromatic compound metabolism; benzene degradation; catechol from benzene: step 1/2. The protein is Benzene 1,2-dioxygenase subunit alpha (bedC1) of Pseudomonas putida (Arthrobacter siderocapsulatus).